The sequence spans 374 residues: Speckle-type POZ protein A (374 aa).

The region spanning 31 to 161 (KFSYMWTINN…DDKLTLFCEV (131 aa)) is the MATH domain. The tract at residues 71-191 (VNPKGLDEES…PECRLADELG (121 aa)) is required for nuclear localization. One can recognise a BTB domain in the interval 173 to 297 (QNTMNMVKVP…MCEEALCSNL (125 aa)). The interval 297-355 (LSVENAAEILILADLHSADQLKTQAVDFINYHASDVMETSGWKSMVVSHPHLVAEAYRS) is homodimerization.

This sequence belongs to the Tdpoz family. Homodimer. Part of cullin-RING-based BCR (BTB-CUL3-RBX1) E3 ubiquitin-protein ligase complexes that contain CUL3 and SPOP, plus a target protein.

The protein resides in the nucleus. It is found in the nucleus speckle. It participates in protein modification; protein ubiquitination. Functionally, component of a cullin-RING-based BCR (BTB-CUL3-RBX1) E3 ubiquitin-protein ligase complex that mediates the ubiquitination of target proteins, leading most often to their proteasomal degradation. In Xenopus laevis (African clawed frog), this protein is Speckle-type POZ protein A (spop-a).